The chain runs to 274 residues: Cytochrome c oxidase subunit 3 (274 aa).

The Cytoplasmic segment spans residues 2–15 (AHVKNHDYQILPPS). A helical membrane pass occupies residues 16-36 (IWPFFGAIGAFVMLTGAVAWM). The Periplasmic segment spans residues 37–48 (KGITFFGLPVEG). A helical membrane pass occupies residues 49 to 77 (PWMFLIGLVGVLYVMFGWWADVVNEGETG). The Cytoplasmic portion of the chain corresponds to 78–79 (EH). The chain crosses the membrane as a helical span at residues 80-115 (TPVVRIGLQYGFILFIMSEVMFFVAWFWAFIKNALY). At 116 to 139 (PMGPDSPIKDGVWPPEGIVTFDPW) the chain is on the periplasmic side. A helical transmembrane segment spans residues 140-166 (HLPLINTLILLLSGVAVTWAHHAFVLE). Residues 167–168 (GD) are Cytoplasmic-facing. A helical transmembrane segment spans residues 169-197 (RKTTINGLIVAVILGVCFTGLQAYEYSHA). Residues 198-203 (AFGLAD) are Periplasmic-facing. Residues 204–237 (TVYAGAFYMATGFHGAHVIIGTIFLFVCLIRLLK) traverse the membrane as a helical segment. Residues 238-244 (GQMTQKQ) are Cytoplasmic-facing. Residues 245-274 (HVGFEAAAWYWHFVDVVWLFLFVVIYIWGR) traverse the membrane as a helical segment.

The protein belongs to the cytochrome c oxidase subunit 3 family.

The protein resides in the cell inner membrane. It catalyses the reaction 4 Fe(II)-[cytochrome c] + O2 + 8 H(+)(in) = 4 Fe(III)-[cytochrome c] + 2 H2O + 4 H(+)(out). This chain is Cytochrome c oxidase subunit 3 (ctaE), found in Paracoccus denitrificans.